A 904-amino-acid chain; its full sequence is Patched domain-containing protein 4 (904 aa).

A helical transmembrane segment spans residues 41–61 (HPVFFLTVPAVLTITFGLSAL). Residue Asn-149 is glycosylated (N-linked (GlcNAc...) asparagine). The SSD domain maps to 291 to 450 (TRSKVLVSLV…FSFFGSCLVF (160 aa)). The next 6 helical transmembrane spans lie at 295–312 (VLVS…SSSM), 323–343 (GLLG…IFFI), 351–371 (TLLG…FELL), 394–414 (VMVT…MGAS), 431–451 (VSIL…LVFA), and 523–543 (PFVV…CLQI). Asn-625 is a glycosylation site (N-linked (GlcNAc...) asparagine). 3 helical membrane-spanning segments follow: residues 718–738 (PVLI…FLVI), 744–764 (FWLI…MTLW), and 771–791 (ISIL…APLL). Residue Asn-820 is glycosylated (N-linked (GlcNAc...) asparagine). 2 consecutive transmembrane segments (helical) span residues 823-843 (SFLI…FTLF) and 845-865 (CLLL…PVFL).

This sequence belongs to the patched family.

It localises to the membrane. Its function is as follows. Could act as a repressor of canonical hedgehog signaling by antagonizing the effects of SMO, as suggested by down-regulation of hedgehog target genes, including GLI1, PTCH1, and PTCH2 in PTCHD4-expressing cells. This Mus musculus (Mouse) protein is Patched domain-containing protein 4 (Ptchd4).